We begin with the raw amino-acid sequence, 309 residues long: tRNA dimethylallyltransferase (309 aa).

An ATP-binding site is contributed by 8–15 (GPTATGKS). 10–15 (TATGKS) is a binding site for substrate. Residues 33-36 (DSRQ) form an interaction with substrate tRNA region.

It belongs to the IPP transferase family. In terms of assembly, monomer. It depends on Mg(2+) as a cofactor.

It catalyses the reaction adenosine(37) in tRNA + dimethylallyl diphosphate = N(6)-dimethylallyladenosine(37) in tRNA + diphosphate. Catalyzes the transfer of a dimethylallyl group onto the adenine at position 37 in tRNAs that read codons beginning with uridine, leading to the formation of N6-(dimethylallyl)adenosine (i(6)A). In Trichodesmium erythraeum (strain IMS101), this protein is tRNA dimethylallyltransferase.